The following is a 178-amino-acid chain: Sec-independent protein translocase protein TatB (178 aa).

The chain crosses the membrane as a helical span at residues 2–22 (LPEIGAAELLIIAAVALIVVG). A disordered region spans residues 104-178 (HSPTGYENTV…KARKTAGSAE (75 aa)). Residues 114–131 (EPPPPEPEPQPAAEPAPK) show a composition bias toward pro residues. Low complexity predominate over residues 141 to 154 (PKAAAAPKAAAKPK).

This sequence belongs to the TatB family. In terms of assembly, the Tat system comprises two distinct complexes: a TatABC complex, containing multiple copies of TatA, TatB and TatC subunits, and a separate TatA complex, containing only TatA subunits. Substrates initially bind to the TatABC complex, which probably triggers association of the separate TatA complex to form the active translocon.

It localises to the cell inner membrane. Functionally, part of the twin-arginine translocation (Tat) system that transports large folded proteins containing a characteristic twin-arginine motif in their signal peptide across membranes. Together with TatC, TatB is part of a receptor directly interacting with Tat signal peptides. TatB may form an oligomeric binding site that transiently accommodates folded Tat precursor proteins before their translocation. This Phenylobacterium zucineum (strain HLK1) protein is Sec-independent protein translocase protein TatB.